A 389-amino-acid polypeptide reads, in one-letter code: Alkanesulfonate monooxygenase (389 aa).

The protein belongs to the SsuD family.

The enzyme catalyses an alkanesulfonate + FMNH2 + O2 = an aldehyde + FMN + sulfite + H2O + 2 H(+). Functionally, catalyzes the desulfonation of aliphatic sulfonates. The protein is Alkanesulfonate monooxygenase of Agrobacterium fabrum (strain C58 / ATCC 33970) (Agrobacterium tumefaciens (strain C58)).